The following is a 90-amino-acid chain: Probable Fe(2+)-trafficking protein (90 aa).

It belongs to the Fe(2+)-trafficking protein family.

Its function is as follows. Could be a mediator in iron transactions between iron acquisition and iron-requiring processes, such as synthesis and/or repair of Fe-S clusters in biosynthetic enzymes. This Pseudomonas putida (strain ATCC 700007 / DSM 6899 / JCM 31910 / BCRC 17059 / LMG 24140 / F1) protein is Probable Fe(2+)-trafficking protein.